The primary structure comprises 194 residues: Lachesicidin (194 aa).

The first 22 residues, 1–22 (MQGFFWKTWLVLAVCGTPASLA), serve as a signal peptide directing secretion. Positions 23-160 (HRPLSYGEAL…DEEKDQPKRV (138 aa)) are excised as a propeptide. 2 disulfides stabilise this stretch: C79/C90 and C101/C118. Residues 125 to 154 (EEEEEEEEEEQKAEAENDEEVEKEKEDEEK) are compositionally biased toward acidic residues. Positions 125-157 (EEEEEEEEEEQKAEAENDEEVEKEKEDEEKDQP) are disordered.

This sequence belongs to the cathelicidin family. Expressed by the venom gland.

Its subcellular location is the secreted. The protein localises to the target cell membrane. In terms of biological role, potent antimicrobial peptide against Gram-negative and Gram-positive bacteria. Adopts an amphipathic alpha helical conformation, that may allow to partition into the target membrane. Low hemolytic activities have been observed on mammalian cells. The sequence is that of Lachesicidin from Lachesis muta rhombeata (Bushmaster).